Consider the following 346-residue polypeptide: Uroporphyrinogen decarboxylase (346 aa).

Substrate is bound by residues 23-27, aspartate 73, tyrosine 151, serine 206, and histidine 321; that span reads RQAGR.

Belongs to the uroporphyrinogen decarboxylase family. As to quaternary structure, homodimer.

The protein localises to the cytoplasm. The enzyme catalyses uroporphyrinogen III + 4 H(+) = coproporphyrinogen III + 4 CO2. It functions in the pathway porphyrin-containing compound metabolism; protoporphyrin-IX biosynthesis; coproporphyrinogen-III from 5-aminolevulinate: step 4/4. In terms of biological role, catalyzes the decarboxylation of four acetate groups of uroporphyrinogen-III to yield coproporphyrinogen-III. The chain is Uroporphyrinogen decarboxylase from Aliarcobacter butzleri (strain RM4018) (Arcobacter butzleri).